The primary structure comprises 388 residues: 1-deoxy-D-xylulose 5-phosphate reductoisomerase (388 aa).

7 residues coordinate NADPH: Thr13, Gly14, Ser15, Ile16, Arg40, Asn41, and Asn124. Lys125 lines the 1-deoxy-D-xylulose 5-phosphate pocket. Residue Glu126 coordinates NADPH. Position 150 (Asp150) interacts with Mn(2+). 1-deoxy-D-xylulose 5-phosphate is bound by residues Ser151, Glu152, Ser176, and His199. Residue Glu152 coordinates Mn(2+). Gly205 is an NADPH binding site. Residues Ser212, Asn217, Lys218, and Glu221 each coordinate 1-deoxy-D-xylulose 5-phosphate. Glu221 is a binding site for Mn(2+).

It belongs to the DXR family. As to quaternary structure, homodimer. Requires Mg(2+) as cofactor. Mn(2+) is required as a cofactor. The cofactor is Co(2+).

The catalysed reaction is 2-C-methyl-D-erythritol 4-phosphate + NADP(+) = 1-deoxy-D-xylulose 5-phosphate + NADPH + H(+). It functions in the pathway isoprenoid biosynthesis; isopentenyl diphosphate biosynthesis via DXP pathway; isopentenyl diphosphate from 1-deoxy-D-xylulose 5-phosphate: step 1/6. With respect to regulation, competitively inhibited by the antibiotic fosmidomycin. Functionally, catalyzes the NADPH-dependent rearrangement and reduction of 1-deoxy-D-xylulose-5-phosphate (DXP) to 2-C-methyl-D-erythritol 4-phosphate (MEP). Cannot use NADH instead of NADPH as the reducing agent. The protein is 1-deoxy-D-xylulose 5-phosphate reductoisomerase of Zymomonas mobilis subsp. mobilis (strain ATCC 31821 / ZM4 / CP4).